We begin with the raw amino-acid sequence, 305 residues long: Oxygen-dependent coproporphyrinogen-III oxidase (305 aa).

Ser-98 provides a ligand contact to substrate. A divalent metal cation contacts are provided by His-102 and His-112. His-112 serves as the catalytic Proton donor. Residue 114-116 (NVR) participates in substrate binding. The a divalent metal cation site is built by His-151 and His-181. Residues 246–281 (YVEFNLVYDRGTLFGLQSGGRTESILMSMPPLARWE) form an important for dimerization region. 264–266 (GGR) is a substrate binding site.

The protein belongs to the aerobic coproporphyrinogen-III oxidase family. As to quaternary structure, homodimer. The cofactor is a divalent metal cation.

It localises to the cytoplasm. It catalyses the reaction coproporphyrinogen III + O2 + 2 H(+) = protoporphyrinogen IX + 2 CO2 + 2 H2O. Its pathway is porphyrin-containing compound metabolism; protoporphyrin-IX biosynthesis; protoporphyrinogen-IX from coproporphyrinogen-III (O2 route): step 1/1. In terms of biological role, involved in the heme biosynthesis. Catalyzes the aerobic oxidative decarboxylation of propionate groups of rings A and B of coproporphyrinogen-III to yield the vinyl groups in protoporphyrinogen-IX. The chain is Oxygen-dependent coproporphyrinogen-III oxidase from Vibrio vulnificus (strain YJ016).